A 233-amino-acid chain; its full sequence is NADP-dependent glyceraldehyde-3-phosphate dehydrogenase (233 aa).

7–8 (NY) lines the substrate pocket. Lys-30 and Ser-33 together coordinate NADP(+). An NAD(+)-binding site is contributed by 83 to 87 (GGDTG). Catalysis depends on Glu-102, which acts as the Proton acceptor. Residue 135 to 137 (RCT) coordinates substrate. The active-site Nucleophile is Cys-136. Positions 180 and 229 each coordinate NADP(+).

The protein belongs to the aldehyde dehydrogenase family.

It localises to the cytoplasm. The enzyme catalyses D-glyceraldehyde 3-phosphate + NADP(+) + H2O = (2R)-3-phosphoglycerate + NADPH + 2 H(+). In terms of biological role, important as a means of generating NADPH for biosynthetic reactions. In Scenedesmus vacuolatus (Green alga), this protein is NADP-dependent glyceraldehyde-3-phosphate dehydrogenase (GapN).